Consider the following 400-residue polypeptide: Formate-dependent phosphoribosylglycinamide formyltransferase (400 aa).

N(1)-(5-phospho-beta-D-ribosyl)glycinamide-binding positions include 22–23 (EL) and Glu-82. ATP is bound by residues Arg-114, Lys-155, 160–165 (SSGKGQ), 195–198 (EGFV), and Glu-203. The 190-residue stretch at 119 to 308 (RLAAEELGLS…EFALHARALL (190 aa)) folds into the ATP-grasp domain. Residues Glu-267 and Glu-279 each coordinate Mg(2+). Residues Asp-286, Lys-356, and 363-364 (RR) each bind N(1)-(5-phospho-beta-D-ribosyl)glycinamide.

The protein belongs to the PurK/PurT family. Homodimer.

The catalysed reaction is N(1)-(5-phospho-beta-D-ribosyl)glycinamide + formate + ATP = N(2)-formyl-N(1)-(5-phospho-beta-D-ribosyl)glycinamide + ADP + phosphate + H(+). The protein operates within purine metabolism; IMP biosynthesis via de novo pathway; N(2)-formyl-N(1)-(5-phospho-D-ribosyl)glycinamide from N(1)-(5-phospho-D-ribosyl)glycinamide (formate route): step 1/1. In terms of biological role, involved in the de novo purine biosynthesis. Catalyzes the transfer of formate to 5-phospho-ribosyl-glycinamide (GAR), producing 5-phospho-ribosyl-N-formylglycinamide (FGAR). Formate is provided by PurU via hydrolysis of 10-formyl-tetrahydrofolate. The polypeptide is Formate-dependent phosphoribosylglycinamide formyltransferase (Hahella chejuensis (strain KCTC 2396)).